Here is a 59-residue protein sequence, read N- to C-terminus: Large ribosomal subunit protein bL32 (59 aa).

Residues 1-40 (MAVQQNKKSPSKRGMHRSHDFLRTTPLSVDPGTGEVHLRH) are disordered.

It belongs to the bacterial ribosomal protein bL32 family.

The sequence is that of Large ribosomal subunit protein bL32 from Nitrosospira multiformis (strain ATCC 25196 / NCIMB 11849 / C 71).